We begin with the raw amino-acid sequence, 316 residues long: N-acetyl-gamma-glutamyl-phosphate reductase (316 aa).

C136 is a catalytic residue.

The protein belongs to the NAGSA dehydrogenase family. Type 1 subfamily.

The protein resides in the cytoplasm. The enzyme catalyses N-acetyl-L-glutamate 5-semialdehyde + phosphate + NADP(+) = N-acetyl-L-glutamyl 5-phosphate + NADPH + H(+). Its pathway is amino-acid biosynthesis; L-arginine biosynthesis; N(2)-acetyl-L-ornithine from L-glutamate: step 3/4. Functionally, catalyzes the NADPH-dependent reduction of N-acetyl-5-glutamyl phosphate to yield N-acetyl-L-glutamate 5-semialdehyde. The sequence is that of N-acetyl-gamma-glutamyl-phosphate reductase from Xanthomonas campestris pv. campestris (strain ATCC 33913 / DSM 3586 / NCPPB 528 / LMG 568 / P 25).